A 299-amino-acid polypeptide reads, in one-letter code: Acetaldehyde dehydrogenase 2 (299 aa).

Catalysis depends on Cys-130, which acts as the Acyl-thioester intermediate. NAD(+) contacts are provided by residues 161–169 (SVGPGTRKN) and Asn-272.

This sequence belongs to the acetaldehyde dehydrogenase family.

The enzyme catalyses acetaldehyde + NAD(+) + CoA = acetyl-CoA + NADH + H(+). This is Acetaldehyde dehydrogenase 2 from Burkholderia lata (strain ATCC 17760 / DSM 23089 / LMG 22485 / NCIMB 9086 / R18194 / 383).